Consider the following 425-residue polypeptide: Dihydroorotase (425 aa).

Zn(2+) is bound by residues His58 and His60. Substrate-binding positions include His60 to Arg62 and Asn92. The Zn(2+) site is built by Asp150, His177, and His230. Asn276 contacts substrate. Asp303 is a Zn(2+) binding site. Residue Asp303 is part of the active site. Substrate is bound by residues His307 and Phe321–Gly322.

This sequence belongs to the metallo-dependent hydrolases superfamily. DHOase family. Class I DHOase subfamily. Requires Zn(2+) as cofactor.

It catalyses the reaction (S)-dihydroorotate + H2O = N-carbamoyl-L-aspartate + H(+). The protein operates within pyrimidine metabolism; UMP biosynthesis via de novo pathway; (S)-dihydroorotate from bicarbonate: step 3/3. Its function is as follows. Catalyzes the reversible cyclization of carbamoyl aspartate to dihydroorotate. This chain is Dihydroorotase, found in Pediococcus pentosaceus (strain ATCC 25745 / CCUG 21536 / LMG 10740 / 183-1w).